A 1070-amino-acid chain; its full sequence is DNA-directed RNA polymerase subunit beta (1070 aa).

It belongs to the RNA polymerase beta chain family. As to quaternary structure, in plastids the minimal PEP RNA polymerase catalytic core is composed of four subunits: alpha, beta, beta', and beta''. When a (nuclear-encoded) sigma factor is associated with the core the holoenzyme is formed, which can initiate transcription.

It is found in the plastid. The protein resides in the chloroplast. It catalyses the reaction RNA(n) + a ribonucleoside 5'-triphosphate = RNA(n+1) + diphosphate. Its function is as follows. DNA-dependent RNA polymerase catalyzes the transcription of DNA into RNA using the four ribonucleoside triphosphates as substrates. The polypeptide is DNA-directed RNA polymerase subunit beta (Citrus sinensis (Sweet orange)).